Reading from the N-terminus, the 115-residue chain is Large ribosomal subunit protein bL19 (115 aa).

It belongs to the bacterial ribosomal protein bL19 family.

This protein is located at the 30S-50S ribosomal subunit interface and may play a role in the structure and function of the aminoacyl-tRNA binding site. The protein is Large ribosomal subunit protein bL19 of Streptococcus pneumoniae (strain JJA).